The chain runs to 263 residues: Indole-3-glycerol phosphate synthase (263 aa).

It belongs to the TrpC family.

The enzyme catalyses 1-(2-carboxyphenylamino)-1-deoxy-D-ribulose 5-phosphate + H(+) = (1S,2R)-1-C-(indol-3-yl)glycerol 3-phosphate + CO2 + H2O. It participates in amino-acid biosynthesis; L-tryptophan biosynthesis; L-tryptophan from chorismate: step 4/5. The sequence is that of Indole-3-glycerol phosphate synthase from Laribacter hongkongensis (strain HLHK9).